We begin with the raw amino-acid sequence, 622 residues long: UvrABC system protein C (622 aa).

In terms of domain architecture, GIY-YIG spans 13-92 (DKPGVYLMKN…IKENRPKYNV (80 aa)). The 36-residue stretch at 205 to 240 (DELIKKIEEKMKRAAEKMDFEGAAHYRDQRQALLDI) folds into the UVR domain.

The protein belongs to the UvrC family. Interacts with UvrB in an incision complex.

It is found in the cytoplasm. Functionally, the UvrABC repair system catalyzes the recognition and processing of DNA lesions. UvrC both incises the 5' and 3' sides of the lesion. The N-terminal half is responsible for the 3' incision and the C-terminal half is responsible for the 5' incision. This Alkaliphilus metalliredigens (strain QYMF) protein is UvrABC system protein C.